The sequence spans 465 residues: Phytase A (465 aa).

An N-terminal signal peptide occupies residues 1-26 (MVTLTFLLSAAYLLSGRVSAAPSSAG). Cys30 and Cys39 are disulfide-bonded. 1D-myo-inositol hexakisphosphate is bound by residues Gln49, Tyr50, Arg80, His81, Arg84, and Thr87. 4 disulfides stabilise this stretch: Cys70–Cys412, Cys213–Cys463, Cys262–Cys280, and Cys434–Cys442. The active-site Nucleophile is His81. Asn104 carries N-linked (GlcNAc...) asparagine glycosylation. A 1D-myo-inositol hexakisphosphate-binding site is contributed by Arg164. N-linked (GlcNAc...) asparagine glycosylation occurs at Asn205. Asp209 is a binding site for 1D-myo-inositol hexakisphosphate. Asn228 is a glycosylation site (N-linked (GlcNAc...) asparagine). Lys299 is a 1D-myo-inositol hexakisphosphate binding site. Residues Asn337 and Asn350 are each glycosylated (N-linked (GlcNAc...) asparagine). Residues His359 and Asp360 each coordinate 1D-myo-inositol hexakisphosphate. Asn374 carries N-linked (GlcNAc...) asparagine glycosylation.

It belongs to the histidine acid phosphatase family. As to quaternary structure, monomer.

The protein resides in the secreted. It carries out the reaction 1D-myo-inositol hexakisphosphate + H2O = 1D-myo-inositol 1,2,4,5,6-pentakisphosphate + phosphate. The catalysed reaction is 1D-myo-inositol 1,2,4,5,6-pentakisphosphate + H2O = 1D-myo-inositol 1,2,5,6-tetrakisphosphate + phosphate. It catalyses the reaction 1D-myo-inositol 1,2,5,6-tetrakisphosphate + H2O = 1D-myo-inositol 1,2,6-trisphosphate + phosphate. The enzyme catalyses 1D-myo-inositol 1,2,6-trisphosphate + H2O = 1D-myo-inositol 1,2-bisphosphate + phosphate. It carries out the reaction 1D-myo-inositol 1,2-bisphosphate + H2O = 1D-myo-inositol 2-phosphate + phosphate. Its function is as follows. Catalyzes the phosphate monoester hydrolysis of phytic acid (myo-inositol hexakisphosphate), which results in the stepwise formation of myo-inositol pentakis-, tetrakis-, tris-, bis-, and monophosphates, as well as the liberation of inorganic phosphate. Myo-inositol 2-monophosphate is the end product. Has a broad substrate specificity and is also able to dephosphorylate other classic acid phosphatase substrates such as p-nitrophenyl phosphate, phenyl phosphate, fructose 1,6-bisphosphate, fructose 6-phosphate, glucose 6-phosphate, ribose 5-phosphate, alpha-glycerophosphate, beta-glycerophosphate, 3-phosphoglycerate, phosphoenolpyruvate, as well as ADP and ATP. This chain is Phytase A (phyA), found in Aspergillus fumigatus (strain ATCC MYA-4609 / CBS 101355 / FGSC A1100 / Af293) (Neosartorya fumigata).